The primary structure comprises 235 residues: 7-carboxy-7-deazaguanine synthase (235 aa).

Residues Leu-27–Gly-29 and Arg-42 contribute to the substrate site. Positions Phe-33–Ala-235 constitute a Radical SAM core domain. 3 residues coordinate [4Fe-4S] cluster: Cys-46, Cys-50, and Cys-53. Thr-55 provides a ligand contact to Mg(2+). A substrate-binding site is contributed by Thr-87. S-adenosyl-L-methionine-binding positions include Gly-89 and Ser-133–Lys-135.

This sequence belongs to the radical SAM superfamily. 7-carboxy-7-deazaguanine synthase family. In terms of assembly, homodimer. Requires [4Fe-4S] cluster as cofactor. The cofactor is S-adenosyl-L-methionine. Mg(2+) is required as a cofactor.

It catalyses the reaction 6-carboxy-5,6,7,8-tetrahydropterin + H(+) = 7-carboxy-7-deazaguanine + NH4(+). Its pathway is purine metabolism; 7-cyano-7-deazaguanine biosynthesis. Its function is as follows. Catalyzes the complex heterocyclic radical-mediated conversion of 6-carboxy-5,6,7,8-tetrahydropterin (CPH4) to 7-carboxy-7-deazaguanine (CDG), a step common to the biosynthetic pathways of all 7-deazapurine-containing compounds. The sequence is that of 7-carboxy-7-deazaguanine synthase from Rhodospirillum rubrum (strain ATCC 11170 / ATH 1.1.1 / DSM 467 / LMG 4362 / NCIMB 8255 / S1).